We begin with the raw amino-acid sequence, 145 residues long: Lysozyme-like protein 4 (145 aa).

A signal peptide spans 1-19 (MQLYLVLLLISYLLTPIGA). In terms of domain architecture, C-type lysozyme spans 20 to 145 (SILGRCTVAK…LDRWLDGCDL (126 aa)). 4 cysteine pairs are disulfide-bonded: cysteine 25–cysteine 143, cysteine 49–cysteine 130, cysteine 84–cysteine 95, and cysteine 91–cysteine 109. The active site involves glutamate 54.

Belongs to the glycosyl hydrolase 22 family. As to quaternary structure, monomer. In terms of tissue distribution, expressed strongly in testis and in epididymis, and weakly in brain and lung. Detected in sperm (at protein level).

It is found in the secreted. Its subcellular location is the cytoplasmic vesicle. The protein resides in the secretory vesicle. The protein localises to the acrosome. It localises to the cell projection. It is found in the cilium. Its subcellular location is the flagellum. May be involved in fertilization. Has no detectable bacteriolytic in vitro. Has no lysozyme activity in vitro. The sequence is that of Lysozyme-like protein 4 (Lyzl4) from Mus musculus (Mouse).